The following is a 367-amino-acid chain: Aspartate-semialdehyde dehydrogenase (367 aa).

NADP(+) is bound by residues 10–13 (RGMV), 37–38 (TS), and Q73. R102 contacts phosphate. C135 functions as the Acyl-thioester intermediate in the catalytic mechanism. C135 is modified (S-cysteinyl cysteine; in inhibited form). Q162 is a substrate binding site. Residues 165-166 (SG) and P193 contribute to the NADP(+) site. E241 is a substrate binding site. K244 serves as a coordination point for phosphate. R267 contacts substrate. H274 functions as the Proton acceptor in the catalytic mechanism. Q350 contributes to the NADP(+) binding site.

Belongs to the aspartate-semialdehyde dehydrogenase family. In terms of assembly, homodimer.

The catalysed reaction is L-aspartate 4-semialdehyde + phosphate + NADP(+) = 4-phospho-L-aspartate + NADPH + H(+). The protein operates within amino-acid biosynthesis; L-lysine biosynthesis via DAP pathway; (S)-tetrahydrodipicolinate from L-aspartate: step 2/4. It functions in the pathway amino-acid biosynthesis; L-methionine biosynthesis via de novo pathway; L-homoserine from L-aspartate: step 2/3. Its pathway is amino-acid biosynthesis; L-threonine biosynthesis; L-threonine from L-aspartate: step 2/5. Functionally, catalyzes the NADPH-dependent formation of L-aspartate-semialdehyde (L-ASA) by the reductive dephosphorylation of L-aspartyl-4-phosphate. The polypeptide is Aspartate-semialdehyde dehydrogenase (Escherichia coli O6:H1 (strain CFT073 / ATCC 700928 / UPEC)).